Reading from the N-terminus, the 346-residue chain is Holliday junction branch migration complex subunit RuvB (346 aa).

A large ATPase domain (RuvB-L) region spans residues 1 to 182 (MKIELLNTPA…FGISSRFDYY (182 aa)). Residues Ile-21, Arg-22, Gly-63, Lys-66, Thr-67, Thr-68, 129 to 131 (EDF), Arg-172, Tyr-182, and Arg-219 each bind ATP. A Mg(2+)-binding site is contributed by Thr-67. The segment at 183-253 (PPELLERIIL…IAMTTLASLE (71 aa)) is small ATPAse domain (RuvB-S). Positions 256 to 346 (EEGLDDMDKK…GPLFDAAPAR (91 aa)) are head domain (RuvB-H). The DNA site is built by Arg-311 and Arg-316.

Belongs to the RuvB family. As to quaternary structure, homohexamer. Forms an RuvA(8)-RuvB(12)-Holliday junction (HJ) complex. HJ DNA is sandwiched between 2 RuvA tetramers; dsDNA enters through RuvA and exits via RuvB. An RuvB hexamer assembles on each DNA strand where it exits the tetramer. Each RuvB hexamer is contacted by two RuvA subunits (via domain III) on 2 adjacent RuvB subunits; this complex drives branch migration. In the full resolvosome a probable DNA-RuvA(4)-RuvB(12)-RuvC(2) complex forms which resolves the HJ.

The protein resides in the cytoplasm. The enzyme catalyses ATP + H2O = ADP + phosphate + H(+). Its function is as follows. The RuvA-RuvB-RuvC complex processes Holliday junction (HJ) DNA during genetic recombination and DNA repair, while the RuvA-RuvB complex plays an important role in the rescue of blocked DNA replication forks via replication fork reversal (RFR). RuvA specifically binds to HJ cruciform DNA, conferring on it an open structure. The RuvB hexamer acts as an ATP-dependent pump, pulling dsDNA into and through the RuvAB complex. RuvB forms 2 homohexamers on either side of HJ DNA bound by 1 or 2 RuvA tetramers; 4 subunits per hexamer contact DNA at a time. Coordinated motions by a converter formed by DNA-disengaged RuvB subunits stimulates ATP hydrolysis and nucleotide exchange. Immobilization of the converter enables RuvB to convert the ATP-contained energy into a lever motion, pulling 2 nucleotides of DNA out of the RuvA tetramer per ATP hydrolyzed, thus driving DNA branch migration. The RuvB motors rotate together with the DNA substrate, which together with the progressing nucleotide cycle form the mechanistic basis for DNA recombination by continuous HJ branch migration. Branch migration allows RuvC to scan DNA until it finds its consensus sequence, where it cleaves and resolves cruciform DNA. The sequence is that of Holliday junction branch migration complex subunit RuvB from Chlorobium phaeobacteroides (strain DSM 266 / SMG 266 / 2430).